Consider the following 182-residue polypeptide: Ribosome-recycling factor (182 aa).

This sequence belongs to the RRF family.

Its subcellular location is the cytoplasm. Responsible for the release of ribosomes from messenger RNA at the termination of protein biosynthesis. May increase the efficiency of translation by recycling ribosomes from one round of translation to another. The polypeptide is Ribosome-recycling factor (Prochlorococcus marinus (strain MIT 9215)).